The primary structure comprises 769 residues: Non-secreted LysM effector LysM17 (769 aa).

The chain crosses the membrane as a helical span at residues 173-193 (LPPLATAIPLAVVWASLASVI). 4 N-linked (GlcNAc...) asparagine glycosylation sites follow: asparagine 305, asparagine 368, asparagine 423, and asparagine 452. 2 LysM domains span residues 498 to 543 (RTIQ…HVCC) and 562 to 610 (YSNL…KICL). 4 N-linked (GlcNAc...) asparagine glycosylation sites follow: asparagine 631, asparagine 671, asparagine 706, and asparagine 734.

This sequence belongs to the secreted LysM effector family.

Its subcellular location is the membrane. Its function is as follows. Non-secreted LysM effector that might be involved in manipulation of host defenses for successful infection. The sequence is that of Non-secreted LysM effector LysM17 from Penicillium expansum (Blue mold rot fungus).